The sequence spans 387 residues: 4-hydroxy-3-methylbut-2-en-1-yl diphosphate synthase (flavodoxin) (387 aa).

The [4Fe-4S] cluster site is built by Cys280, Cys283, Cys315, and Glu322.

It belongs to the IspG family. It depends on [4Fe-4S] cluster as a cofactor.

The catalysed reaction is (2E)-4-hydroxy-3-methylbut-2-enyl diphosphate + oxidized [flavodoxin] + H2O + 2 H(+) = 2-C-methyl-D-erythritol 2,4-cyclic diphosphate + reduced [flavodoxin]. Its pathway is isoprenoid biosynthesis; isopentenyl diphosphate biosynthesis via DXP pathway; isopentenyl diphosphate from 1-deoxy-D-xylulose 5-phosphate: step 5/6. In terms of biological role, converts 2C-methyl-D-erythritol 2,4-cyclodiphosphate (ME-2,4cPP) into 1-hydroxy-2-methyl-2-(E)-butenyl 4-diphosphate. The sequence is that of 4-hydroxy-3-methylbut-2-en-1-yl diphosphate synthase (flavodoxin) from Mycobacterium bovis (strain ATCC BAA-935 / AF2122/97).